A 421-amino-acid chain; its full sequence is Serine protease HTRA2, mitochondrial (421 aa).

Residues 63 to 81 traverse the membrane as a helical segment; that stretch reads VIRFFVPFSLGALASTMVA. The IAP-binding motif lies at 74–77; sequence ALAS. Positions 138 to 301 are serine protease; it reads SNGSGFVIEQ…IPIDYVKVFL (164 aa). Catalysis depends on charge relay system residues His-156, Asp-188, and Ser-265. Residues 324 to 409 form the PDZ domain; the sequence is MGITMLTLTP…ELDIVILRGV (86 aa).

This sequence belongs to the peptidase S1C family. In terms of assembly, interacts with th/DIAP1 (via BIR 2 domain).

Its subcellular location is the mitochondrion intermembrane space. The protein resides in the mitochondrion membrane. It catalyses the reaction Cleavage of non-polar aliphatic amino-acids at the P1 position, with a preference for Val, Ile and Met. At the P2 and P3 positions, Arg is selected most strongly with a secondary preference for other hydrophilic residues.. Its function is as follows. Serine protease that shows proteolytic activity against a non-specific substrate beta-casein. Promotes or induces cell death either by direct binding to and inhibition of BIRC proteins (also called inhibitor of apoptosis proteins, IAPs), leading to an increase in caspase activity, or by a BIRC inhibition-independent, caspase-independent and serine protease activity-dependent mechanism. Can antagonize antiapoptotic activity of th/Diap1 by directly inducing the degradation of th/Diap1. This chain is Serine protease HTRA2, mitochondrial, found in Drosophila virilis (Fruit fly).